The following is a 439-amino-acid chain: Acyl-coenzyme A thioesterase 10, mitochondrial (439 aa).

Residues 1 to 21 (MKRAAMRLWTLNKGLLTHGRG) constitute a mitochondrion transit peptide. HotDog ACOT-type domains are found at residues 85–209 (SYIE…QDSE) and 289–401 (EDTK…EKEV).

It belongs to the acyl coenzyme A hydrolase family.

It is found in the mitochondrion. Its function is as follows. Catalyzes the hydrolysis of acyl-CoAs into free fatty acids and coenzyme A (CoASH), regulating their respective intracellular levels. Active on long chain acyl-CoAs. The chain is Acyl-coenzyme A thioesterase 10, mitochondrial from Mus musculus (Mouse).